A 356-amino-acid chain; its full sequence is Galectin-9C (356 aa).

A Galectin 1 domain is found at 17-148; the sequence is FSGTIQGGLQ…SVQLSYISFQ (132 aa). 82–88 contacts a beta-D-galactoside; it reads WGPEERK. The disordered stretch occupies residues 170–190; that stretch reads FPPRPRGRRQKPPSVRPANPA. A Galectin 2 domain is found at 228-356; that stretch reads FITTIPGGLY…GDIQLTHVQT (129 aa). An a beta-D-galactoside-binding site is contributed by 288–294; the sequence is WGSEERS.

Functionally, binds galactosides. This chain is Galectin-9C (LGALS9C), found in Homo sapiens (Human).